Consider the following 346-residue polypeptide: PPE family protein PPE17 (346 aa).

The interval 6–159 (FPPEFNSLNI…LYATMAAAAA (154 aa)) is PPE.

Belongs to the mycobacterial PPE family. Interacts with LRR motifs 15-20 of host Toll-like receptor 2 (TLR2).

Its subcellular location is the secreted. It is found in the cell wall. The protein localises to the cell surface. Functionally, induces pro-inflammatory responses. Induces host TLR1/2 heterodimerization, which causes an increased recruitment of IRAK1, MYD88, and protein kinase C epsilon (PRKCE) to the downstream TLR-signaling complex that translocates PRKCE into the nucleus in an IRAK1-dependent manner. PRKCE-mediated phosphorylation allowed the nuclear IRAK3 to be exported to the cytoplasm, leading to increased activation of ERK1/2, stabilization of MAPK phosphatase 1 (MKP1), and induction of TNF-alpha with concomitant down-regulation of MAP kinase p38. During M.tuberculosis and HIV-1 co-infection, can stimulate transcription from the long terminal repeat (LTR) of HIV-1 in monocyte/macrophage cells. Interaction with human TLR2 activates the NF-kappa-B transcription factor, which binds to the promoter region of the HIV-1 and induces HIV-1 gene expression. The protein is PPE family protein PPE17 (PPE17) of Mycobacterium tuberculosis (strain ATCC 25618 / H37Rv).